A 226-amino-acid polypeptide reads, in one-letter code: V-type proton ATPase subunit E (226 aa).

The protein belongs to the V-ATPase E subunit family. In terms of assembly, V-ATPase is a heteromultimeric enzyme made up of two complexes: the ATP-hydrolytic V1 complex and the proton translocation V0 complex. The V1 complex consists of three catalytic AB heterodimers that form a heterohexamer, three peripheral stalks each consisting of EG heterodimers, one central rotor including subunits D and F, and the regulatory subunits C and H. The proton translocation complex V0 consists of the proton transport subunit a, a ring of proteolipid subunits c9c'', rotary subunit d, subunits e and f, and the accessory subunits vah-19/Ac45 and vah-20/PRR. Expressed in the excretory cell and syncytial hypodermal cells (at protein level). Expressed in the intestine (at protein level).

The protein localises to the cytoplasm. It is found in the apical cell membrane. Its function is as follows. Subunit of the V1 complex of vacuolar(H+)-ATPase (V-ATPase), a multisubunit enzyme composed of a peripheral complex (V1) that hydrolyzes ATP and a membrane integral complex (V0) that translocates protons. V-ATPase is responsible for acidifying and maintaining the pH of intracellular compartments and in some cell types, is targeted to the plasma membrane, where it is responsible for acidifying the extracellular environment. Regulates pH homeostasis in the intestine. Probably by regulating cytoplasmic pH, required for cell survival in the intestine and hypodermis. Involved in receptor-mediated endocytosis. Involved in embryogenesis and larval development. This is V-type proton ATPase subunit E from Caenorhabditis elegans.